Reading from the N-terminus, the 466-residue chain is Soluble pyridine nucleotide transhydrogenase (466 aa).

36–45 (ERYQNVGGGC) provides a ligand contact to FAD.

It belongs to the class-I pyridine nucleotide-disulfide oxidoreductase family. Homooligomer; probable homooctamer. It depends on FAD as a cofactor.

The protein resides in the cytoplasm. The catalysed reaction is NAD(+) + NADPH = NADH + NADP(+). In terms of biological role, conversion of NADPH, generated by peripheral catabolic pathways, to NADH, which can enter the respiratory chain for energy generation. The chain is Soluble pyridine nucleotide transhydrogenase from Shigella flexneri.